The following is a 685-amino-acid chain: MAKKINNEYNDASIQVLEGLEAVRKRPGMYIGSTDSRGLHHLVYEIVDNAVDEALSGYGNEINVTIQKDNSICVADSGRGMPTGMHASGIPTVEVIFTVLHAGGKFGQGGYKTSGGLHGVGASVVNALSKWLEVHIVRDGVEYMERFEDGGKPVGTLKKIGKTKKRNGTSVTFLPDDTIFSTTNFSYEILAERLRESAFLLKGVKITLTDERGEEPKEEVFHYEEGIKEFVAYLNEEKDTLTPVVYFSGAKEGIEVELAYQYNDGYSENVLSFVNNVRTKDGGTHEVGMKTSMTKAYNEYARKVGLLKEKDKNLEGSDFREGLAAVLSIRVPENLLQFEGQTKGKLGTPLARTVVDNVVGEQMGFYLQENSEMSQSLIRKAIKAREAREAARKAREESRNGKKRKKGESLLSGKLTPAQSRNPKKNELYLVEGDSAGGSAKQGRDRKFQAILPLRGKVINTEKAKMQDILKNEEINTMIYTIGAGVGPEFSIEDCNYDKIIIMTDADTDGAHIQVLLLTFFYRYMKPLIEAGKVYIALPPLYKVSKGTGKKSVIEYAWTDGELAEVIDKVGKGYMLQRYKGLGEMNAEQLWETTMDPETRTLIRVRIDDAAQAERRVTTLMGDKVEPRRKWIEQHVQFTLEEDGSILDRSEEDTSAPTGESLLDAEKTKEAEQTDDTEISLFDIE.

The segment covering 389-400 (EAARKAREESRN) has biased composition (basic and acidic residues). The interval 389-427 (EAARKAREESRNGKKRKKGESLLSGKLTPAQSRNPKKNE) is disordered. The Toprim domain occupies 426 to 540 (NELYLVEGDS…AGKVYIALPP (115 aa)). The Mg(2+) site is built by Glu432, Asp505, and Asp507. Acidic residues-rich tracts occupy residues 644–654 (GSILDRSEEDT) and 673–685 (QTDDTEISLFDIE). Positions 644 to 685 (GSILDRSEEDTSAPTGESLLDAEKTKEAEQTDDTEISLFDIE) are disordered.

It belongs to the type II topoisomerase family. ParE type 1 subfamily. Heterotetramer composed of ParC and ParE. Mg(2+) is required as a cofactor. The cofactor is Mn(2+). It depends on Ca(2+) as a cofactor.

It catalyses the reaction ATP-dependent breakage, passage and rejoining of double-stranded DNA.. Pyrrolopyrimidines inhibit both GyrB and its paralog in topoisomerase IV (parE). Topoisomerase IV is essential for chromosome segregation. It relaxes supercoiled DNA. Performs the decatenation events required during the replication of a circular DNA molecule. In Enterococcus faecalis (strain ATCC 700802 / V583), this protein is DNA topoisomerase 4 subunit B.